The following is a 66-amino-acid chain: Large ribosomal subunit protein bL35 (66 aa).

Over residues 1–26 (MPKMKTHRGAAKRVKRTGSGKLKRSR) the composition is skewed to basic residues. Residues 1 to 49 (MPKMKTHRGAAKRVKRTGSGKLKRSRAFTSHLFANKSTKQKRKLRKASL) are disordered.

It belongs to the bacterial ribosomal protein bL35 family.

The polypeptide is Large ribosomal subunit protein bL35 (Staphylococcus saprophyticus subsp. saprophyticus (strain ATCC 15305 / DSM 20229 / NCIMB 8711 / NCTC 7292 / S-41)).